A 251-amino-acid polypeptide reads, in one-letter code: Ubiquinone/menaquinone biosynthesis C-methyltransferase UbiE (251 aa).

S-adenosyl-L-methionine is bound by residues threonine 74, aspartate 95, 123–124 (NA), and serine 140.

The protein belongs to the class I-like SAM-binding methyltransferase superfamily. MenG/UbiE family.

It catalyses the reaction a 2-demethylmenaquinol + S-adenosyl-L-methionine = a menaquinol + S-adenosyl-L-homocysteine + H(+). It carries out the reaction a 2-methoxy-6-(all-trans-polyprenyl)benzene-1,4-diol + S-adenosyl-L-methionine = a 5-methoxy-2-methyl-3-(all-trans-polyprenyl)benzene-1,4-diol + S-adenosyl-L-homocysteine + H(+). Its pathway is quinol/quinone metabolism; menaquinone biosynthesis; menaquinol from 1,4-dihydroxy-2-naphthoate: step 2/2. It participates in cofactor biosynthesis; ubiquinone biosynthesis. Its function is as follows. Methyltransferase required for the conversion of demethylmenaquinol (DMKH2) to menaquinol (MKH2) and the conversion of 2-polyprenyl-6-methoxy-1,4-benzoquinol (DDMQH2) to 2-polyprenyl-3-methyl-6-methoxy-1,4-benzoquinol (DMQH2). In Klebsiella pneumoniae subsp. pneumoniae (strain ATCC 700721 / MGH 78578), this protein is Ubiquinone/menaquinone biosynthesis C-methyltransferase UbiE.